Consider the following 121-residue polypeptide: uncharacterized protein (121 aa).

Residues 6 to 26 form a helical membrane-spanning segment; it reads ITTASILLVVIVAFCAAAPMI.

It is found in the membrane. This is an uncharacterized protein from Caenorhabditis elegans.